Reading from the N-terminus, the 324-residue chain is Glyoxylate/hydroxypyruvate reductase B (324 aa).

Active-site residues include R237 and E266. H285 serves as the catalytic Proton donor.

The protein belongs to the D-isomer specific 2-hydroxyacid dehydrogenase family. GhrB subfamily. Homodimer.

It localises to the cytoplasm. It carries out the reaction glycolate + NADP(+) = glyoxylate + NADPH + H(+). It catalyses the reaction (R)-glycerate + NAD(+) = 3-hydroxypyruvate + NADH + H(+). The enzyme catalyses (R)-glycerate + NADP(+) = 3-hydroxypyruvate + NADPH + H(+). In terms of biological role, catalyzes the NADPH-dependent reduction of glyoxylate and hydroxypyruvate into glycolate and glycerate, respectively. The protein is Glyoxylate/hydroxypyruvate reductase B of Shigella dysenteriae serotype 1 (strain Sd197).